We begin with the raw amino-acid sequence, 451 residues long: Cyclin-dependent kinase 14 (451 aa).

A phosphoserine mark is found at Ser-60 and Ser-77. A disordered region spans residues 84 to 114; the sequence is NFKTSSTGKESPKVRRHSSPSSPTSPKFGKA. Ser-116 carries the phosphoserine modification. Residues 117-401 enclose the Protein kinase domain; sequence YEKLEKLGEG…AQAALSHEYF (285 aa). Residues 123–131 and Lys-146 each bind ATP; that span reads LGEGSYATV. Asp-238 functions as the Proton acceptor in the catalytic mechanism.

Belongs to the protein kinase superfamily. CMGC Ser/Thr protein kinase family. CDC2/CDKX subfamily. As to quaternary structure, found in a complex with LRP6, CCNY and CAPRIN2 during G2/M stage; CAPRIN2 functions as a scaffold for the complex by binding to CCNY via its N terminus and to CDK14 via its C terminus. Interacts with CCNY; CCNY mediates its recruitment to the plasma membrane and promotes phosphorylation of LRP6. Interacts with CCDN3 and CDKN1A. Interacts with SEPT8. Interacts with 14-3-3 proteina YWHAB, YWHAE, YWHAH and YWHAQ.

It is found in the cell membrane. The protein resides in the cytoplasm. The protein localises to the nucleus. It catalyses the reaction L-seryl-[protein] + ATP = O-phospho-L-seryl-[protein] + ADP + H(+). It carries out the reaction L-threonyl-[protein] + ATP = O-phospho-L-threonyl-[protein] + ADP + H(+). With respect to regulation, serine/threonine-protein kinase activity is promoted by associated cyclins CCDN3 and CCNY and repressed by CDKN1A. Serine/threonine-protein kinase involved in the control of the eukaryotic cell cycle, whose activity is controlled by an associated cyclin. Acts as a cell-cycle regulator of Wnt signaling pathway during G2/M phase by mediating the phosphorylation of LRP6 at 'Ser-1490', leading to the activation of the Wnt signaling pathway. Acts as a regulator of cell cycle progression and cell proliferation via its interaction with CCDN3. Phosphorylates RB1 in vitro, however the relevance of such result remains to be confirmed in vivo. May also play a role in meiosis, neuron differentiation and may indirectly act as a negative regulator of insulin-responsive glucose transport. This chain is Cyclin-dependent kinase 14 (CDK14), found in Plecturocebus moloch (Dusky titi monkey).